Reading from the N-terminus, the 471-residue chain is Putative multidrug resistance protein MdtD (471 aa).

The next 13 membrane-spanning stretches (helical) occupy residues 12-32 (LWIVAFGFFMQSLDTTIVNTA), 49-69 (MVVVSYVLTVAVMLPASGWLA), 77-97 (IFFTAIVLFTLGSLFCAWSST), 102-124 (VLARVLQGVGGAMMVPVGRLTVM), 138-158 (FVTLPGQVGPLLGPALGGILV), 165-185 (WIFLINIPVGIVGAIATLMLM), 197-217 (LSGFLLLAVGMAVLTMALDGS), 222-242 (LSPLSLGALVLCGILAIALYL), 263-283 (FSLGLSGSFAGRVGSGMLPFM), 286-306 (VFLQIGLGFSPFHAGLMMIPM), 342-362 (LLFMSVAMLGWYYALPFVLFL), 396-416 (MIMQLSMSIGVTIAGLLLGMF), and 431-451 (VFMYTWLCMALIIALPALIFA).

This sequence belongs to the major facilitator superfamily. TCR/Tet family.

It is found in the cell inner membrane. In Citrobacter koseri (strain ATCC BAA-895 / CDC 4225-83 / SGSC4696), this protein is Putative multidrug resistance protein MdtD.